We begin with the raw amino-acid sequence, 1237 residues long: MSVLTSPRGKVEVVHCRRTESQDVYCIKSLIRKFTCKLFGKLNIIYLLEKANLAVTLCNDKEEIMAQATFLDYPNWNVAKQDDWVSVFRELDSDIPCTPLNTLFMHLFVAVDEYSVGCCKEILRTVYKAVPELHFIFLIVPSYMSLGSTLITVFDQVGNIPCLTYEEDFAVHICHRHSHYPQLHVRKARVEDHDDLMPIFMRYDTILKETYGEYFLAELIEAQDEENHAVVCEVEGTAVGFMSVCSRVNMQLLHECFDLGPFHGLCFPHPDDVLESPQDLSVRRSQDAELRSSSQGSQKIVEELQEPVSPDTMENIQGNIAREAASEEALTAVQSGNVSEPEDIEKLSDISTGYAQYHHVSSRSLASLVLPEEPVHFRPIYRGASAAFCIQLFCIDEKYEARSLDFMNFVFSLFSDKNFCVISLPHLTPEFFLIQNFVKMVPFNTCTLEQDLYVFHRAGLLKSINIRFATLLDTPGVENLVSTLMLNKSILEDLDRYNKARKDPDGTLLQAFVAEVAEQIVGIAVIRNEMDIEYIRSHYNIEDFIYFSHHQREEHGHMHHFALNPIFRHYTKFFLKEILRLGFKSCLYYRVYPKSREGKFQNPYAHSLTSALHYLVPVRPRRQIVYPLEKLGINAPSKAVSKDPMSYALNHTNRKLTLEPKITVNAKIIVVGASSVGISFLETLVFCSHMKFNNLTLISTHGLPGKKLLDTEQRKFLASDHCFNDKDYALMSLCSWVNVVVGRMTGIDRAAKHVVLSTDEIVPYDHLILCTGQQYQVPCPTEADISQHLTNREVPNSSQRRYTGKVPCNHFTLNEEEDCFKALIWIRNNSITTEGNIIVYGNTIDTYTTVETLLNLGVSGSRIHLVQPPPASTITCINNYSVESAVADALGAAGVTMYRDAILAQWNDGLHPDPIYSASFTTPTKPFRLQCSMFFSFCEKNVDYETFKALNDACLVYDSRLVIDTNFHTNDIAIRAAGSLTKFSNRYYSNEWTHSNFSSKEIGFQLAAAMLHLFDPTLEPVTEPPANLDRLIPMYKGAKIQGGILPGSYHYLHIAKPAIPTPLEVQMAQPNYGLELVTGSAKNGTYFRIHINKYKMVETITCLSREPFPASNYIRLFGQHEQLLNNLCARYDENLITDLYSYFTEPWCLALFHDRFIDLRKELRQILASKEEEDLPSIEQLAHQIEDEEINPTEKPRQYLKRVFEESIYKTLVERSTLDYLHYNRYHLPMYAWPGIV.

The disordered stretch occupies residues 278-301; it reads QDLSVRRSQDAELRSSSQGSQKIV. The segment covering 281-290 has biased composition (basic and acidic residues); sequence SVRRSQDAEL.

In terms of assembly, component of axonemal radial spokes, the protein complexes that link the outer microtubule doublets with the central pair of microtubules. Interacts with CFAP91/MAATS1, ODAD2/ARMC4, RSPH3A, ROPN1, ROPN1L and RSPH9. Interacts with DYNLT1, DYNC1I2 and TUBB3. Interacts with WDR35, IFT22 and IFT81.

Its subcellular location is the cytoplasm. The protein localises to the cytoskeleton. It is found in the flagellum axoneme. Functionally, involved in sperm flagellum assembly. Plays an essential role in the formation of the radial spokes in flagellum axoneme. This chain is Cilia- and flagella-associated protein 61, found in Homo sapiens (Human).